Here is a 1211-residue protein sequence, read N- to C-terminus: A disintegrin and metalloproteinase with thrombospondin motifs 2 (1211 aa).

A signal peptide spans 1-29 (MDPPAGAARRLLCPALLLLLLLLPPPLLP). Positions 30–253 (PPPPPANARL…GVLEEHANSS (224 aa)) are excised as a propeptide. Asn-112 and Asn-251 each carry an N-linked (GlcNAc...) asparagine glycan. A Peptidase M12B domain is found at 266–470 (YNIEVLLGVD…HSYDCLLDDP (205 aa)). Disulfide bonds link Cys-343-Cys-392, Cys-386-Cys-465, Cys-425-Cys-451, Cys-492-Cys-517, Cys-503-Cys-526, Cys-512-Cys-545, Cys-539-Cys-550, Cys-573-Cys-610, Cys-577-Cys-615, and Cys-588-Cys-600. A Zn(2+)-binding site is contributed by His-408. The active site involves Glu-409. 2 residues coordinate Zn(2+): His-412 and His-418. One can recognise a Disintegrin domain in the interval 480 to 560 (QLPGLHYSMN…IWLTPDILKR (81 aa)). Residues 561–616 (DGSWGAWSPFGSCSRTCGTGVKFRTRQCDNPHPANGGRTCSGLAYDFQLCSRQDCP) enclose the TSP type-1 1 domain. The short motif at 691–693 (RGD) is the Cell attachment site element. The interval 723–851 (KVVKGTFTRS…NVDDNNVLEE (129 aa)) is spacer. 3 consecutive TSP type-1 domains span residues 854-912 (VVYE…NPQE), 914-971 (SQPV…RACS), and 975-1029 (CPGR…GPCP). 2 N-linked (GlcNAc...) asparagine glycosylation sites follow: Asn-949 and Asn-993. 3 disulfide bridges follow: Cys-987-Cys-1023, Cys-991-Cys-1028, and Cys-1002-Cys-1012. Asn-1031 carries an N-linked (GlcNAc...) asparagine glycan. The PLAC domain maps to 1059 to 1097 (SKGHCQGDKSIFCRMEVLSRYCSIPGYNKLCCKSCNLYN). Asn-1098, Asn-1145, and Asn-1150 each carry an N-linked (GlcNAc...) asparagine glycan. Residues 1170–1191 (LEDEVQPPNLIPRRPSPYEKTR) form a disordered region.

In terms of assembly, may belong to a multimeric complex. Binds specifically to collagen type XIV. Zn(2+) is required as a cofactor. Post-translationally, the precursor is cleaved by a furin endopeptidase. In terms of processing, glycosylated. Can be O-fucosylated by POFUT2 on a serine or a threonine residue found within the consensus sequence C1-X(2)-(S/T)-C2-G of the TSP type-1 repeat domains where C1 and C2 are the first and second cysteine residue of the repeat, respectively. Fucosylated repeats can then be further glycosylated by the addition of a beta-1,3-glucose residue by the glucosyltransferase, B3GALTL. Fucosylation mediates the efficient secretion of ADAMTS family members. Can also be C-glycosylated with one or two mannose molecules on tryptophan residues within the consensus sequence W-X-X-W of the TPRs, and N-glycosylated. These other glycosylations can also facilitate secretion. In terms of tissue distribution, expressed at high level in skin, bone, tendon and aorta and at low levels in thymus and brain.

It localises to the secreted. Its subcellular location is the extracellular space. The protein localises to the extracellular matrix. It carries out the reaction Cleaves the N-propeptide of collagen chain alpha1(I) at Pro-|-Gln and of alpha1(II) and alpha2(I) at Ala-|-Gln.. Its function is as follows. Cleaves the propeptides of type I and II collagen prior to fibril assembly. Does not act on type III collagen. Cleaves lysyl oxidase LOX at a site downstream of its propeptide cleavage site to produce a short LOX form with reduced collagen-binding activity. This is A disintegrin and metalloproteinase with thrombospondin motifs 2 (ADAMTS2) from Homo sapiens (Human).